The primary structure comprises 33 residues: Zinc metalloproteinase-disintegrin-like moojenin (33 aa).

One can recognise a Disintegrin domain in the interval 8 to 33 (PPVCGNELLEVGEECDCGTPENCQNE). Ca(2+) contacts are provided by valine 10, asparagine 13, leucine 15, glutamate 17, glutamate 20, and aspartate 23. 2 disulfides stabilise this stretch: cysteine 11–cysteine 30 and cysteine 24–cysteine 30.

The protein belongs to the venom metalloproteinase (M12B) family. P-III subfamily. P-IIIb sub-subfamily. As to quaternary structure, monomer. Zn(2+) is required as a cofactor. The N-terminus (from the N-terminal region of the metalloproteinase domain) is blocked. In terms of tissue distribution, expressed by the venom gland.

The protein resides in the secreted. The fibrinogenolytic and coagulant activities of the moojenin were abolished by preincubation with EDTA, 1,10-phenanthroline and beta-mercaptoethanol. Metalloproteinase moojenin: snake venom metalloproteinase that cleaves both alpha- and beta-chains of fibrinogen, but not the gamma-chain. Shows a coagulant activity on bovine plasma about 3.1 fold lower than crude venom. Renders the blood incoagulable when intraperitoneally administered into mice. Induces necrosis in liver and muscle, but does not cause histological alterations in mouse lungs, kidney or heart. This chain is Zinc metalloproteinase-disintegrin-like moojenin, found in Bothrops moojeni (Lance-headed viper).